We begin with the raw amino-acid sequence, 148 residues long: MEKTFLMVKPDGVQRELIGEIVKRFETKGYKLAGAKLMQVSNQLAETHYSEHKERPFFGELVDFITSGPVFAMVWEGENVIATARKMMGKTNPLEADPSTIRGDFGISVGKNIIHGSDSAESAEREITLFFTENEIVSYEKQANNWIY.

Residues Lys9, Phe57, Arg85, Thr91, Arg102, and Asn112 each contribute to the ATP site. A Phosphothreonine modification is found at Thr91. The active-site Pros-phosphohistidine intermediate is His115. Ser122 carries the phosphoserine modification.

The protein belongs to the NDK family. Homotetramer. Mg(2+) serves as cofactor.

Its subcellular location is the cytoplasm. It carries out the reaction a 2'-deoxyribonucleoside 5'-diphosphate + ATP = a 2'-deoxyribonucleoside 5'-triphosphate + ADP. The catalysed reaction is a ribonucleoside 5'-diphosphate + ATP = a ribonucleoside 5'-triphosphate + ADP. In terms of biological role, major role in the synthesis of nucleoside triphosphates other than ATP. The ATP gamma phosphate is transferred to the NDP beta phosphate via a ping-pong mechanism, using a phosphorylated active-site intermediate. The sequence is that of Nucleoside diphosphate kinase from Oceanobacillus iheyensis (strain DSM 14371 / CIP 107618 / JCM 11309 / KCTC 3954 / HTE831).